The chain runs to 444 residues: Acyl-CoA 6-desaturase (444 aa).

The Cytoplasmic portion of the chain corresponds to 1–130; sequence MGKGGNQGEG…EDMNLFKTNH (130 aa). The region spanning 18–95 is the Cytochrome b5 heme-binding domain; it reads MPTFRWEEIQ…LKPLLIGELA (78 aa). The helical transmembrane segment at 131 to 151 threads the bilayer; that stretch reads LFFFLLLSHIIVMESIAWFIL. At 152 to 157 the chain is on the lumenal side; that stretch reads SYFGNG. Residues 158–178 traverse the membrane as a helical segment; that stretch reads WIPTVITAFVLATSQAQAGWL. Residues 179–264 are Cytoplasmic-facing; that stretch reads QHDYGHLSVY…KYLPYNHQHE (86 aa). Positions 180–184 match the Histidine box-1 motif; sequence HDYGH. Positions 217–221 match the Histidine box-2 motif; it reads HFQHH. The chain crosses the membrane as a helical span at residues 265-285; it reads YFFLIGPPLLIPMYFQYQIIM. Residues 286-305 lie on the Lumenal side of the membrane; sequence TMIRRRDWVDLAWAISYYAR. A helical membrane pass occupies residues 306–326; the sequence is FFYTYIPFYGILGALVFLNFI. Residues 327 to 444 lie on the Cytoplasmic side of the membrane; the sequence is RFLESHWFVW…ELWLDAYLHK (118 aa). Residues 382-386 carry the Histidine box-3 motif; it reads QIEHH.

It belongs to the fatty acid desaturase type 1 family. In terms of tissue distribution, expressed in the liver and brain (at protein level). Highest activity is found in the liver and adrenals followed by the testes and other organs, absent in adipose tissue.

It localises to the endoplasmic reticulum membrane. Its subcellular location is the microsome membrane. The catalysed reaction is (9Z,12Z)-octadecadienoyl-CoA + 2 Fe(II)-[cytochrome b5] + O2 + 2 H(+) = (6Z,9Z,12Z)-octadecatrienoyl-CoA + 2 Fe(III)-[cytochrome b5] + 2 H2O. It catalyses the reaction (9Z,12Z,15Z)-octadecatrienoyl-CoA + 2 Fe(II)-[cytochrome b5] + O2 + 2 H(+) = (6Z,9Z,12Z,15Z)-octadecatetraenoyl-CoA + 2 Fe(III)-[cytochrome b5] + 2 H2O. The enzyme catalyses (9Z,12Z,15Z,18Z,21Z)-tetracosapentaenoyl-CoA + 2 Fe(II)-[cytochrome b5] + O2 + 2 H(+) = (6Z,9Z,12Z,15Z,18Z,21Z)-tetracosahexaenoyl-CoA + 2 Fe(III)-[cytochrome b5] + 2 H2O. It carries out the reaction (11E)-octadecenoyl-CoA + 2 Fe(II)-[cytochrome b5] + O2 + 2 H(+) = (6Z,11E)-octadecadienoyl-CoA + 2 Fe(III)-[cytochrome b5] + 2 H2O. The catalysed reaction is (11Z,14Z)-eicosadienoyl-CoA + 2 Fe(II)-[cytochrome b5] + O2 + 2 H(+) = (8Z,11Z,14Z)-eicosatrienoyl-CoA + 2 Fe(III)-[cytochrome b5] + 2 H2O. It catalyses the reaction (11Z,14Z,17Z)-eicosatrienoyl-CoA + 2 Fe(II)-[cytochrome b5] + O2 + 2 H(+) = (8Z,11Z,14Z,17Z)-eicosatetraenoyl-CoA + 2 Fe(III)-[cytochrome b5] + 2 H2O. The protein operates within lipid metabolism; polyunsaturated fatty acid biosynthesis. Functionally, involved in the biosynthesis of highly unsaturated fatty acids (HUFA) from the essential polyunsaturated fatty acids (PUFA) linoleic acid (LA) (18:2n-6) and alpha-linolenic acid (ALA) (18:3n-3) precursors, acting as a fatty acyl-coenzyme A (CoA) desaturase that introduces a cis double bond at carbon 6 of the fatty acyl chain. Catalyzes the first and rate limiting step in this pathway which is the desaturation of LA (18:2n-6) and ALA (18:3n-3) into gamma-linoleate (GLA) (18:3n-6) and stearidonate (18:4n-3), respectively. Subsequently, in the biosynthetic pathway of HUFA n-3 series, it desaturates tetracosapentaenoate (24:5n-3) to tetracosahexaenoate (24:6n-3), which is then converted to docosahexaenoate (DHA)(22:6n-3), an important lipid for nervous system function. It can also desaturate (11E)-octadecenoate (trans-vaccenoate) at carbon 6 generating (6Z,11E)-octadecadienoate. In addition to Delta-6 activity, this enzyme exhibits Delta-8 activity with slight biases toward n-3 fatty acyl-CoA substrates. This chain is Acyl-CoA 6-desaturase (Fads2), found in Rattus norvegicus (Rat).